The following is a 249-amino-acid chain: Protein-lysine 6-oxidase (249 aa).

Sulfotyrosine is present on tyrosine 19. The lysyl-oxidase like stretch occupies residues 45-249 (PDLVPDPYYI…YASGCTISPY (205 aa)). 5 disulfides stabilise this stretch: cysteine 70–cysteine 76, cysteine 123–cysteine 172, cysteine 156–cysteine 162, cysteine 183–cysteine 193, and cysteine 230–cysteine 244. Cu cation is bound by residues histidine 124, histidine 126, and histidine 128. The lysine tyrosylquinone (Lys-Tyr) cross-link spans 152–187 (KASFCLEDTSCDYGYHRRFACTAHTQGLSPGCYDTY). Position 187 is a 2',4',5'-topaquinone (tyrosine 187).

It belongs to the lysyl oxidase family. In terms of assembly, interacts with MFAP4. Interacts (via propeptide) with EFEMP2; this interaction is strong and facilitates formation of ternary complexes with ELN during elastic fiber assembly; this interaction limits interaction of EFEMP2 with FBLN5. The cofactor is Cu cation. Lysine tyrosylquinone residue is required as a cofactor. The lysine tyrosylquinone cross-link (LTQ) is generated by condensation of the epsilon-amino group of a lysine with a topaquinone produced by oxidation of tyrosine. In terms of processing, proteolytically cleaved by BMP1 which removes the propeptide. Also proteolytically cleaved by ADAMTS2 and ADAMTS14, but not by ADAMTS3, at an additional cleavage site downstream of the BMP1 cleavage site. The propeptide plays a role in directing the deposition of this enzyme to elastic fibers, via interaction with tropoelastin. Cleavage by BMP1 to remove the propeptide does not increase enzymatic activity but increases binding to collagen. Cleavage by ADAMTS2 produces a form with reduced collagen-binding activity. Post-translationally, sulfated at Tyr-19 and also at either Tyr-15 or Tyr-16 which enhances binding to collagen.

It is found in the secreted. Its subcellular location is the extracellular space. It catalyses the reaction L-lysyl-[protein] + O2 + H2O = (S)-2-amino-6-oxohexanoyl-[protein] + H2O2 + NH4(+). In terms of biological role, responsible for the post-translational oxidative deamination of peptidyl lysine residues in precursors to fibrous collagen and elastin. Regulator of Ras expression. May play a role in tumor suppression. Plays a role in the aortic wall architecture. The sequence is that of Protein-lysine 6-oxidase from Sus scrofa (Pig).